The primary structure comprises 246 residues: Phosducin (246 aa).

The segment covering 1 to 14 (MEEAKSQSLEEDFE) has biased composition (acidic residues). A disordered region spans residues 1–70 (MEEAKSQSLE…GKDSKERVSR (70 aa)). Residues 1–244 (MEEAKSQSLE…LEHTKIEEED (244 aa)) form the Phosducin domain. The span at 60–69 (NGKDSKERVS) shows a compositional bias: basic and acidic residues. At Ser-73 the chain carries Phosphoserine; by PKA. The thioredoxin fold stretch occupies residues 111 to 246 (YGFVYELETG…HTKIEEEDVE (136 aa)).

Belongs to the phosducin family. As to quaternary structure, forms a complex with the beta and gamma subunits of the GTP-binding protein, transducin. Interacts with CRX. In terms of processing, light-induced changes in cyclic nucleotide levels modulate the phosphorylation of this protein by cAMP kinase.

The protein localises to the cytoplasm. It localises to the cytosol. The protein resides in the nucleus. It is found in the cell projection. Its subcellular location is the cilium. The protein localises to the photoreceptor outer segment. It localises to the photoreceptor inner segment. May participate in the regulation of visual phototransduction or in the integration of photoreceptor metabolism. Inhibits the transcriptional activation activity of the cone-rod homeobox CRX. The chain is Phosducin (PDC) from Homo sapiens (Human).